A 145-amino-acid polypeptide reads, in one-letter code: D-aminoacyl-tRNA deacylase (145 aa).

Residues 137-138 carry the Gly-cisPro motif, important for rejection of L-amino acids motif; that stretch reads GP.

Belongs to the DTD family. Homodimer.

It is found in the cytoplasm. It catalyses the reaction glycyl-tRNA(Ala) + H2O = tRNA(Ala) + glycine + H(+). It carries out the reaction a D-aminoacyl-tRNA + H2O = a tRNA + a D-alpha-amino acid + H(+). An aminoacyl-tRNA editing enzyme that deacylates mischarged D-aminoacyl-tRNAs. Also deacylates mischarged glycyl-tRNA(Ala), protecting cells against glycine mischarging by AlaRS. Acts via tRNA-based rather than protein-based catalysis; rejects L-amino acids rather than detecting D-amino acids in the active site. By recycling D-aminoacyl-tRNA to D-amino acids and free tRNA molecules, this enzyme counteracts the toxicity associated with the formation of D-aminoacyl-tRNA entities in vivo and helps enforce protein L-homochirality. This chain is D-aminoacyl-tRNA deacylase, found in Azotobacter vinelandii (strain DJ / ATCC BAA-1303).